The primary structure comprises 85 residues: Homeobox protein knotted-1-like 7 (85 aa).

In terms of domain architecture, ELK spans 1–21 (ELKNELKQGYKEKLVDIREEI). A DNA-binding region (homeobox; TALE-type) is located at residues 22 to 85 (MRKRRAGKLP…NQRKRNWHSN (64 aa)).

Belongs to the TALE/KNOX homeobox family. Expressed in all tissues examined. Highest expression in leaves.

The protein resides in the nucleus. The polypeptide is Homeobox protein knotted-1-like 7 (KNOX7) (Zea mays (Maize)).